Here is a 376-residue protein sequence, read N- to C-terminus: Erythronate-4-phosphate dehydrogenase (376 aa).

Substrate-binding residues include S45 and T67. D147 contributes to the NAD(+) binding site. R209 is a catalytic residue. An NAD(+)-binding site is contributed by D233. E238 is an active-site residue. The active-site Proton donor is the H255. Position 258 (G258) interacts with NAD(+). Position 259 (Y259) interacts with substrate.

The protein belongs to the D-isomer specific 2-hydroxyacid dehydrogenase family. PdxB subfamily. In terms of assembly, homodimer.

It localises to the cytoplasm. The enzyme catalyses 4-phospho-D-erythronate + NAD(+) = (R)-3-hydroxy-2-oxo-4-phosphooxybutanoate + NADH + H(+). It functions in the pathway cofactor biosynthesis; pyridoxine 5'-phosphate biosynthesis; pyridoxine 5'-phosphate from D-erythrose 4-phosphate: step 2/5. Its function is as follows. Catalyzes the oxidation of erythronate-4-phosphate to 3-hydroxy-2-oxo-4-phosphonooxybutanoate. The chain is Erythronate-4-phosphate dehydrogenase from Shewanella sp. (strain MR-4).